The chain runs to 303 residues: Imidazoleglycerol-phosphate dehydratase (303 aa).

This sequence belongs to the imidazoleglycerol-phosphate dehydratase family.

The protein localises to the cytoplasm. The enzyme catalyses D-erythro-1-(imidazol-4-yl)glycerol 3-phosphate = 3-(imidazol-4-yl)-2-oxopropyl phosphate + H2O. Its pathway is amino-acid biosynthesis; L-histidine biosynthesis; L-histidine from 5-phospho-alpha-D-ribose 1-diphosphate: step 6/9. The sequence is that of Imidazoleglycerol-phosphate dehydratase from Neisseria gonorrhoeae (strain ATCC 700825 / FA 1090).